The chain runs to 310 residues: uncharacterized protein (310 aa).

The tract at residues 1 to 70 (MAGNSQRRGA…ARGRTDETET (70 aa)) is disordered. A compositionally biased stretch (basic residues) spans 49–62 (AAKRAKAQQRRPAR). Residues Gly262, Val282, and Leu291 each coordinate S-adenosyl-L-methionine.

Belongs to the class IV-like SAM-binding methyltransferase superfamily. RNA methyltransferase TrmH family.

This is an uncharacterized protein from Mycobacterium marinum (strain ATCC BAA-535 / M).